Reading from the N-terminus, the 253-residue chain is Trypsin delta (253 aa).

Positions 1 to 22 (MLKFVILLSAVACALGGTVPEG) are cleaved as a signal peptide. The propeptide at 23–30 (LLPQLDGR) is activation peptide. Residues 31 to 253 (IVGGSATTIS…ALRSWVISNA (223 aa)) enclose the Peptidase S1 domain. Cys-56 and Cys-72 are disulfide-bonded. Residues His-71 and Asp-116 each act as charge relay system in the active site. Disulfide bonds link Cys-180/Cys-197 and Cys-206/Cys-230. Ser-210 serves as the catalytic Charge relay system.

This sequence belongs to the peptidase S1 family.

Its subcellular location is the secreted. The protein resides in the extracellular space. It catalyses the reaction Preferential cleavage: Arg-|-Xaa, Lys-|-Xaa.. This chain is Trypsin delta, found in Drosophila melanogaster (Fruit fly).